We begin with the raw amino-acid sequence, 658 residues long: UvrABC system protein B (658 aa).

In terms of domain architecture, Helicase ATP-binding spans 26–413 (EGINSGKKKQ…SPEVIEQIIR (388 aa)). Residue 39–46 (GATGTGKT) participates in ATP binding. The short motif at 92–115 (YYDYYQPEAYVPQTDTFIEKDAQI) is the Beta-hairpin element. Residues 430-596 (QIDDLLGEIQ…TIQKGVRDVI (167 aa)) form the Helicase C-terminal domain. In terms of domain architecture, UVR spans 622–657 (EKTIAKMEAEMKEAAKALDFERAAELRDLLLELKAE).

It belongs to the UvrB family. In terms of assembly, forms a heterotetramer with UvrA during the search for lesions. Interacts with UvrC in an incision complex.

The protein localises to the cytoplasm. Functionally, the UvrABC repair system catalyzes the recognition and processing of DNA lesions. A damage recognition complex composed of 2 UvrA and 2 UvrB subunits scans DNA for abnormalities. Upon binding of the UvrA(2)B(2) complex to a putative damaged site, the DNA wraps around one UvrB monomer. DNA wrap is dependent on ATP binding by UvrB and probably causes local melting of the DNA helix, facilitating insertion of UvrB beta-hairpin between the DNA strands. Then UvrB probes one DNA strand for the presence of a lesion. If a lesion is found the UvrA subunits dissociate and the UvrB-DNA preincision complex is formed. This complex is subsequently bound by UvrC and the second UvrB is released. If no lesion is found, the DNA wraps around the other UvrB subunit that will check the other stand for damage. In Bacillus cereus (strain ATCC 14579 / DSM 31 / CCUG 7414 / JCM 2152 / NBRC 15305 / NCIMB 9373 / NCTC 2599 / NRRL B-3711), this protein is UvrABC system protein B.